Here is a 2182-residue protein sequence, read N- to C-terminus: Autophagy-related protein 2 (2182 aa).

Disordered regions lie at residues 291 to 375 (SPSL…PLAD), 392 to 426 (EQDYPLGDSEDALGIPYEFSNPQDDDAEDSPATPR), 523 to 630 (YTHE…STTL), 663 to 682 (DIDPENPRASTKQQEDVATP), 736 to 758 (GAFSVHGATHAQQRSSQGTSSVE), and 793 to 816 (DKKPSPAEGSKQDTASKDAPSKET). 2 stretches are compositionally biased toward polar residues: residues 303–313 (NPPSRQATELS) and 322–331 (VSSSQASIRS). A compositionally biased stretch (basic and acidic residues) spans 332–347 (NEPESASHHSLPENDH). 2 stretches are compositionally biased toward acidic residues: residues 528 to 540 (AENEPAPEVEQTT) and 613 to 624 (WDDDYDDPEEEP). Over residues 745–758 (HAQQRSSQGTSSVE) the composition is skewed to polar residues. Residues 793–813 (DKKPSPAEGSKQDTASKDAPS) are compositionally biased toward basic and acidic residues.

Belongs to the ATG2 family. Interacts with ATG18.

The protein localises to the preautophagosomal structure membrane. The protein resides in the endoplasmic reticulum membrane. The catalysed reaction is a 1,2-diacyl-sn-glycero-3-phosphocholine(in) = a 1,2-diacyl-sn-glycero-3-phosphocholine(out). The enzyme catalyses a 1,2-diacyl-sn-glycero-3-phospho-L-serine(in) = a 1,2-diacyl-sn-glycero-3-phospho-L-serine(out). It catalyses the reaction a 1,2-diacyl-sn-glycero-3-phosphoethanolamine(in) = a 1,2-diacyl-sn-glycero-3-phosphoethanolamine(out). Lipid transfer protein required for autophagosome completion and peroxisome degradation and peroxisome degradation. Tethers the edge of the isolation membrane (IM) to the endoplasmic reticulum (ER) and mediates direct lipid transfer from ER to IM for IM expansion. ATG2 binds to the ER exit site (ERES), which is the membrane source for autophagosome formation, using basic residues in its N-terminal region (NR) and to the expanding edge of the IM through its C-terminal region. The latter binding is assisted by an ATG18-PtdIns3P interaction. ATG2 then extracts phospholipids from the membrane source using its NR and transfers them to ATG9 to the IM through its predicted beta-sheet-rich structure for membrane expansion. Autophagy is required for proper vegetative growth, asexual/sexual reproduction, and full virulence. Autophagy is particularly involved in the biosynthesis of deoxynivalenol (DON), an important virulence determinant. The protein is Autophagy-related protein 2 of Gibberella zeae (strain ATCC MYA-4620 / CBS 123657 / FGSC 9075 / NRRL 31084 / PH-1) (Wheat head blight fungus).